The chain runs to 648 residues: Fidgetin-like protein 2 (648 aa).

Residues 1–36 (MHWTPEHAQPLNQWPEQHLDVSSTTPSPAHKLELPP) are disordered. Positions 10 to 27 (PLNQWPEQHLDVSSTTPS) are enriched in polar residues. ATP-binding positions include Ala394 and 434 to 439 (GCGKAL).

This sequence belongs to the AAA ATPase family. Mg(2+) is required as a cofactor.

The protein resides in the cytoplasm. The protein localises to the cell cortex. It carries out the reaction ATP + H2O = ADP + phosphate + H(+). In terms of biological role, microtubule-severing enzyme that negatively regulates cell migration and wound healing. In migrating cells, targets dynamic microtubules (MTs) at the leading edge and severs them, thereby suppressing motility. Microtubule severing releases ARHGEF2 which activates RHOA, which in turn regulates focal ahesion turnover via focal adhesion kinase, as opposed to F-actin polymerization, to suppress cell motility. Negative regulator of axon regeneration that suppresses axonal growth by selectively severing dynamic MTs in the distal axon shaft and growth cone. Contributes to proper cell branching during endothelial and neuronal development. The chain is Fidgetin-like protein 2 (Fignl2) from Rattus norvegicus (Rat).